Here is a 261-residue protein sequence, read N- to C-terminus: Hydroxyethylthiazole kinase (261 aa).

Residue methionine 38 coordinates substrate. ATP-binding residues include arginine 114 and threonine 159. Residue glycine 186 participates in substrate binding.

This sequence belongs to the Thz kinase family. The cofactor is Mg(2+).

The enzyme catalyses 5-(2-hydroxyethyl)-4-methylthiazole + ATP = 4-methyl-5-(2-phosphooxyethyl)-thiazole + ADP + H(+). The protein operates within cofactor biosynthesis; thiamine diphosphate biosynthesis; 4-methyl-5-(2-phosphoethyl)-thiazole from 5-(2-hydroxyethyl)-4-methylthiazole: step 1/1. Catalyzes the phosphorylation of the hydroxyl group of 4-methyl-5-beta-hydroxyethylthiazole (THZ). This chain is Hydroxyethylthiazole kinase, found in Streptococcus suis (strain 05ZYH33).